The primary structure comprises 453 residues: Bifunctional protein GlmU (453 aa).

The pyrophosphorylase stretch occupies residues 1–225 (MNIVILAAGT…GWETLGVNSK (225 aa)). UDP-N-acetyl-alpha-D-glucosamine-binding positions include 6–9 (LAAG), K20, Q71, 76–77 (GT), 98–100 (YGD), G135, E150, N165, and N223. D100 is a Mg(2+) binding site. Position 223 (N223) interacts with Mg(2+). The interval 226-246 (AQLAELERIHQRNLADALLAA) is linker. Residues 247 to 453 (GVTLADPARI…GYVRPVKKKS (207 aa)) are N-acetyltransferase. Residues R329 and K347 each contribute to the UDP-N-acetyl-alpha-D-glucosamine site. The active-site Proton acceptor is H359. UDP-N-acetyl-alpha-D-glucosamine is bound by residues Y362 and N373. Acetyl-CoA is bound by residues A376, 382–383 (NY), S401, and A419.

The protein in the N-terminal section; belongs to the N-acetylglucosamine-1-phosphate uridyltransferase family. In the C-terminal section; belongs to the transferase hexapeptide repeat family. As to quaternary structure, homotrimer. Requires Mg(2+) as cofactor.

Its subcellular location is the cytoplasm. It catalyses the reaction alpha-D-glucosamine 1-phosphate + acetyl-CoA = N-acetyl-alpha-D-glucosamine 1-phosphate + CoA + H(+). The enzyme catalyses N-acetyl-alpha-D-glucosamine 1-phosphate + UTP + H(+) = UDP-N-acetyl-alpha-D-glucosamine + diphosphate. It functions in the pathway nucleotide-sugar biosynthesis; UDP-N-acetyl-alpha-D-glucosamine biosynthesis; N-acetyl-alpha-D-glucosamine 1-phosphate from alpha-D-glucosamine 6-phosphate (route II): step 2/2. It participates in nucleotide-sugar biosynthesis; UDP-N-acetyl-alpha-D-glucosamine biosynthesis; UDP-N-acetyl-alpha-D-glucosamine from N-acetyl-alpha-D-glucosamine 1-phosphate: step 1/1. The protein operates within bacterial outer membrane biogenesis; LPS lipid A biosynthesis. Catalyzes the last two sequential reactions in the de novo biosynthetic pathway for UDP-N-acetylglucosamine (UDP-GlcNAc). The C-terminal domain catalyzes the transfer of acetyl group from acetyl coenzyme A to glucosamine-1-phosphate (GlcN-1-P) to produce N-acetylglucosamine-1-phosphate (GlcNAc-1-P), which is converted into UDP-GlcNAc by the transfer of uridine 5-monophosphate (from uridine 5-triphosphate), a reaction catalyzed by the N-terminal domain. The chain is Bifunctional protein GlmU from Burkholderia pseudomallei (strain K96243).